The chain runs to 508 residues: Maturase K (508 aa).

The protein belongs to the intron maturase 2 family. MatK subfamily.

Its subcellular location is the plastid. The protein localises to the chloroplast. In terms of biological role, usually encoded in the trnK tRNA gene intron. Probably assists in splicing its own and other chloroplast group II introns. The polypeptide is Maturase K (Chaetosphaeridium globosum (Charophycean green alga)).